A 151-amino-acid polypeptide reads, in one-letter code: Deoxyuridine 5'-triphosphate nucleotidohydrolase (151 aa).

Residues 70 to 72 (RSG), Asn-83, 87 to 89 (LID), and Met-97 each bind substrate.

This sequence belongs to the dUTPase family. It depends on Mg(2+) as a cofactor.

The catalysed reaction is dUTP + H2O = dUMP + diphosphate + H(+). The protein operates within pyrimidine metabolism; dUMP biosynthesis; dUMP from dCTP (dUTP route): step 2/2. Its function is as follows. This enzyme is involved in nucleotide metabolism: it produces dUMP, the immediate precursor of thymidine nucleotides and it decreases the intracellular concentration of dUTP so that uracil cannot be incorporated into DNA. The sequence is that of Deoxyuridine 5'-triphosphate nucleotidohydrolase from Stutzerimonas stutzeri (strain A1501) (Pseudomonas stutzeri).